A 264-amino-acid polypeptide reads, in one-letter code: Small ribosomal subunit protein uS2 (264 aa).

The disordered stretch occupies residues 228-264 (HEDVSAGPVEEQSDEAQAAEQGTEGDTAQLTSSQGRS). Over residues 251–264 (EGDTAQLTSSQGRS) the composition is skewed to polar residues.

The protein belongs to the universal ribosomal protein uS2 family.

In Deinococcus radiodurans (strain ATCC 13939 / DSM 20539 / JCM 16871 / CCUG 27074 / LMG 4051 / NBRC 15346 / NCIMB 9279 / VKM B-1422 / R1), this protein is Small ribosomal subunit protein uS2.